The primary structure comprises 243 residues: Probable 2-phosphosulfolactate phosphatase (243 aa).

It belongs to the ComB family. It depends on Mg(2+) as a cofactor.

The enzyme catalyses (2R)-O-phospho-3-sulfolactate + H2O = (2R)-3-sulfolactate + phosphate. This chain is Probable 2-phosphosulfolactate phosphatase, found in Prochlorococcus marinus (strain MIT 9303).